Consider the following 90-residue polypeptide: Putative Fis-like DNA-binding protein (90 aa).

Positions 66–85 (QSRAAALLGIHRATLRKKLK) form a DNA-binding region, H-T-H motif.

This sequence belongs to the transcriptional regulatory Fis family.

The sequence is that of Putative Fis-like DNA-binding protein from Xylella fastidiosa (strain 9a5c).